The chain runs to 261 residues: Calcium-binding protein 8 (261 aa).

Positions 1-41 (MRLPEQPGDGKPENETKGDQETPERGEEPRRSPAPDFPTWE) are disordered. The Cytoplasmic segment spans residues 1 to 234 (MRLPEQPGDG…QNRQTCVRKS (234 aa)). Residues 8-33 (GDGKPENETKGDQETPERGEEPRRSP) are compositionally biased toward basic and acidic residues. EF-hand domains are found at residues 78–113 (EELD…LGYM) and 114–149 (PSEV…KLVS). 9 residues coordinate Ca(2+): Asp-91, Asp-93, Asn-95, Glu-102, Asp-127, Asp-129, Asp-131, Gln-133, and Glu-138. Residues 235–255 (LICAFAMAFIISVMLIAANQI) traverse the membrane as a helical; Anchor for type IV membrane protein segment. Topologically, residues 256–261 (LRSGME) are extracellular.

Interacts with PI4KB. This binding competes with FREQ/NCS1 binding in a calcium-dependent manner. In terms of tissue distribution, brain-specific. High expression in the cerebellum, hippocampus, and cortex.

The protein localises to the golgi apparatus. It localises to the trans-Golgi network membrane. It is found in the cytoplasm. The protein resides in the perinuclear region. Its subcellular location is the cell membrane. Functionally, negatively regulates Golgi-to-plasma membrane trafficking by interacting with PI4KB and inhibiting its activity. May play a role in the physiology of neurons and is potentially important in memory and learning. In Mus musculus (Mouse), this protein is Calcium-binding protein 8 (Caln1).